Reading from the N-terminus, the 371-residue chain is Trans-enoyl reductase calK (371 aa).

NADP(+) is bound at residue N51–K54. W145–F152 contacts substrate. NADP(+)-binding positions include G181–S184, S204–S207, Y222, and L269–E270. G289–L293 contacts substrate. V359–R360 is a binding site for NADP(+).

This sequence belongs to the zinc-containing alcohol dehydrogenase family. As to quaternary structure, monomer.

It functions in the pathway secondary metabolite biosynthesis. Its function is as follows. Trans-enoyl reductase; part of the gene cluster that mediates the biosynthesis of calbistrin A and related compounds. Calbistrin A is a secondary metabolite with an interesting structure that was recently found to have bioactivity against leukemia cells. It consists of two polyketides linked by an ester bond: a bicyclic decalin containing polyketide and a linear 12 carbon dioic acid structure. The polyketide synthase calA is probably responsible for forming the decalin moiety. Because calA lacks a designated enoylreductase (ER) domain, the required activity is provided by the trans-enoyl reductase calK. Following release from the PKS, calF then probably catalyzes the oxidation and the subsequent Diels Alder cycloisomerization that lead to the formation of the decalin moiety. The decalin polyketide backbone includes two C-methyl groups, at C7 and C11 in backbone, of which the C7 position is probably methylated by the methyltransferase domain of calA. A candidate for adding the methyl group at C11, if not done by CalA, is the cluster methyltransferase calH. Several additional tailoring enzymes within the cluster could be involved in the modification of the decalin polyketide product. Those include the 3 cytochrome P450 monooxygenases CalE, CalG and CalL, of which one might be responsible for the introduction of the extra hydroxyl group attached to the backbone of the decalin moiety, at position C9 in the backbone, that allows for attachment of the linear moiety. One tailoring enzyme activity that is expected to be involved in biosynthesis of calbistrin is an acyltransferase for connecting the two polyketide synthase products, and which could be performed by the cluster acyltransferase calJ. The enzyme responsible for the biosynthesis of the linear moiety, probably a second PKS, has not been identified yet. In Penicillium decumbens, this protein is Trans-enoyl reductase calK.